We begin with the raw amino-acid sequence, 42 residues long: Delta-hexatoxin-Hv1b (42 aa).

4 disulfides stabilise this stretch: C1/C15, C8/C20, C14/C31, and C16/C42.

The protein belongs to the neurotoxin 06 (delta-actx) family. Expressed by the venom gland.

The protein localises to the secreted. Its function is as follows. Lethal neurotoxin. Slows the inactivation of tetrodotoxin-sensitive voltage-gated sodium channels (Nav) by binding to site 3 of the channel, resulting in repetitive firing in autonomic and motor nerve fibers. This chain is Delta-hexatoxin-Hv1b, found in Hadronyche versuta (Blue mountains funnel-web spider).